We begin with the raw amino-acid sequence, 771 residues long: Post-GPI attachment to proteins factor 6 (771 aa).

The N-terminal stretch at 1 to 34 is a signal peptide; that stretch reads MGRAGTGTGGEAVAAVVAGPLLLLLLARPPPASA. Residues 35–545 lie on the Extracellular side of the membrane; that stretch reads GYSGKSEVGL…STAQTVAQQR (511 aa). N144 carries N-linked (GlcNAc...) asparagine glycosylation. Positions 322–343 are disordered; that stretch reads FNASSGLLSPSPDHQDLGRSGR. Residues 334–343 are compositionally biased toward basic and acidic residues; sequence DHQDLGRSGR. N407 and N431 each carry an N-linked (GlcNAc...) asparagine glycan. The 37-residue stretch at 497–533 folds into the EGF-like domain; that stretch reads PCLNDCGPYGQCLLLRRHSYLYASCSCKAGWRGWSCT. 3 cysteine pairs are disulfide-bonded: C498–C508, C502–C521, and C523–C532. Residues 546-566 traverse the membrane as a helical segment; the sequence is AATLLLTLSNLMFLAPIAVSV. At 567-568 the chain is on the cytoplasmic side; that stretch reads RR. Residues 569 to 589 traverse the membrane as a helical segment; the sequence is FFLVEASVYAYTMFFSTFYHA. The Extracellular portion of the chain corresponds to 590–605; sequence CDQPGEAVLCILSYDT. The helical transmembrane segment at 606-626 threads the bilayer; sequence LQYCDFLGSGAAIWVTILCMA. Topologically, residues 627–629 are cytoplasmic; that stretch reads RLK. The chain crosses the membrane as a helical span at residues 630 to 650; sequence TVLKYVLFLLGTLVIAMSLQL. At 651–653 the chain is on the extracellular side; it reads DRR. A helical transmembrane segment spans residues 654–674; the sequence is GMWNMLGPCLFAFVIMASMWA. At 675-690 the chain is on the cytoplasmic side; that stretch reads YRCGHRRQCYPTSWQR. A helical transmembrane segment spans residues 691-711; that stretch reads WAFYLLPGVSMASVGIAIYTS. Residues 712-717 lie on the Extracellular side of the membrane; sequence MMTSDN. Residues 718 to 738 traverse the membrane as a helical segment; that stretch reads YYYTHSIWHILLAGSAALLLP. Residues 739–771 are Cytoplasmic-facing; that stretch reads PPDQPAEPWACSQKFPCHYQICKNDREELYAVT.

The protein belongs to the TMEM8 family. Glycosylated. In terms of tissue distribution, expressed in pancreas, placenta, spleen, liver, kidney, bone marrow, peripheral blood leukocytes and tonsil.

It localises to the cell membrane. The protein localises to the lysosome membrane. It catalyses the reaction a 1,2-diacyl-sn-glycero-3-phosphocholine + H2O = a 1-acyl-sn-glycero-3-phosphocholine + a fatty acid + H(+). Involved in the lipid remodeling steps of GPI-anchor maturation. Lipid remodeling steps consist in the generation of 2 saturated fatty chains at the sn-2 position of GPI-anchor proteins (GPI-AP). Has phospholipase A2 activity that removes an acyl-chain at the sn-2 position of GPI-anchors during the remodeling of GPI. Required for the shedding of the GPI-AP CRIPTO, but not CFC1, at the cell surface. Shedding of CRIPTO modulates Nodal signaling by allowing soluble CRIPTO to act as a Nodal coreceptor on other cells. Also indirectly involved in the translocation of RAC1 from the cytosol to the plasma membrane by maintaining the steady state amount of CAV1-enriched plasma membrane subdomains, stabilizing RAC1 at the plasma membrane. In contrast to myomaker (TMEM8C), has no fusogenic activity. The chain is Post-GPI attachment to proteins factor 6 from Homo sapiens (Human).